The following is a 231-amino-acid chain: MKQYNDLFKIIHREGYIFIASFALVSFLLASFNEKLGCIGFIATIWCIYFFRNPDRFVPISDDLVISPADGIIQEIKEASPPPELGLGDLEMIRVSIFLNIFNIHVNRIPANGKILALHYNPGKFFNASLDKASLYNERQSVLMETDQGQKIVFVQIAGLIARRIVCDLEEDNEVKMGERYGIIRFGSRVDVYLPLKTALLVSKGQTAIGGETIIADFGRKKTEEFKFERK.

The active-site Schiff-base intermediate with substrate; via pyruvic acid is the Ser-188. Pyruvic acid (Ser); by autocatalysis is present on Ser-188.

This sequence belongs to the phosphatidylserine decarboxylase family. PSD-A subfamily. As to quaternary structure, heterodimer of a large membrane-associated beta subunit and a small pyruvoyl-containing alpha subunit. Pyruvate is required as a cofactor. In terms of processing, is synthesized initially as an inactive proenzyme. Formation of the active enzyme involves a self-maturation process in which the active site pyruvoyl group is generated from an internal serine residue via an autocatalytic post-translational modification. Two non-identical subunits are generated from the proenzyme in this reaction, and the pyruvate is formed at the N-terminus of the alpha chain, which is derived from the carboxyl end of the proenzyme. The post-translation cleavage follows an unusual pathway, termed non-hydrolytic serinolysis, in which the side chain hydroxyl group of the serine supplies its oxygen atom to form the C-terminus of the beta chain, while the remainder of the serine residue undergoes an oxidative deamination to produce ammonia and the pyruvoyl prosthetic group on the alpha chain.

The protein localises to the cell membrane. The enzyme catalyses a 1,2-diacyl-sn-glycero-3-phospho-L-serine + H(+) = a 1,2-diacyl-sn-glycero-3-phosphoethanolamine + CO2. The protein operates within phospholipid metabolism; phosphatidylethanolamine biosynthesis; phosphatidylethanolamine from CDP-diacylglycerol: step 2/2. Catalyzes the formation of phosphatidylethanolamine (PtdEtn) from phosphatidylserine (PtdSer). This is Phosphatidylserine decarboxylase proenzyme from Rickettsia prowazekii (strain Madrid E).